The chain runs to 316 residues: MNQLDALKQYTTVVADTGDFKQLAQFQPQDATTNPSLILKAVQKPEYAPLLKDCVTRWHGRAIDELMDRLIVRFGCEILSIIPGRVSTEVDARLSFDTAATVARAERIVELYQAEGLHIDRVLIKIAATWEGIQAARQLEQRGIHTNLTLLFSFAQAVACGQAKVQLISPFVGRIYDWYKKQAGANWDEAAMAGANDPGVQSVRAIYNHYKHFGIGTEVMGASFRNTGQIVALAGCDLLTIAPELLAQLAASNAPVARVLDPEAARRVALQPVQYDEAGFRYALNADAMATEKLAEGIRAFAADAAKLEQLMQAAA.

Residue lysine 125 is the Schiff-base intermediate with substrate of the active site.

This sequence belongs to the transaldolase family. Type 1 subfamily. Homodimer.

It is found in the cytoplasm. The enzyme catalyses D-sedoheptulose 7-phosphate + D-glyceraldehyde 3-phosphate = D-erythrose 4-phosphate + beta-D-fructose 6-phosphate. Its pathway is carbohydrate degradation; pentose phosphate pathway; D-glyceraldehyde 3-phosphate and beta-D-fructose 6-phosphate from D-ribose 5-phosphate and D-xylulose 5-phosphate (non-oxidative stage): step 2/3. In terms of biological role, transaldolase is important for the balance of metabolites in the pentose-phosphate pathway. The chain is Transaldolase from Acidovorax sp. (strain JS42).